We begin with the raw amino-acid sequence, 293 residues long: Protein boule-like (293 aa).

Polar residues predominate over residues 1–16 (METESRAQSTNQTQTD). The interval 1-39 (METESRAQSTNQTQTDSLSPSPNPVSPVPLNNPTSGPRY) is disordered. Phosphoserine is present on residues Ser19, Ser21, and Ser26. One can recognise an RRM domain in the interval 45-122 (NRIFVGGIDF…KKLNIGPAIR (78 aa)). One can recognise a DAZ domain in the interval 172-196 (PSRSISSSPVMVAQPVYQQPAYHYQ).

It belongs to the RRM DAZ family. As to quaternary structure, interacts with DAZ1 and DAZL. In terms of tissue distribution, testis specific. Not expressed in early embryos, primoridal germ cells and spermatogonial cells. First expressed in the cytoplasm of spermatocytes and then persists through meiosis.

The protein resides in the cytoplasm. Probable RNA-binding protein, which may be required during spermatogenesis. May act by binding to the 3'-UTR of mRNAs and regulating their translation. The polypeptide is Protein boule-like (Mus musculus (Mouse)).